The primary structure comprises 29 residues: Cytochrome b6-f complex subunit 8 (29 aa).

The chain crosses the membrane as a helical span at residues 3–23; it reads IDVLGWVALLVVFTWSIAMVV.

It belongs to the PetN family. In terms of assembly, the 4 large subunits of the cytochrome b6-f complex are cytochrome b6, subunit IV (17 kDa polypeptide, PetD), cytochrome f and the Rieske protein, while the 4 small subunits are PetG, PetL, PetM and PetN. The complex functions as a dimer.

The protein resides in the cellular thylakoid membrane. Its function is as follows. Component of the cytochrome b6-f complex, which mediates electron transfer between photosystem II (PSII) and photosystem I (PSI), cyclic electron flow around PSI, and state transitions. The polypeptide is Cytochrome b6-f complex subunit 8 (Mastigocladus laminosus (Fischerella sp.)).